Here is a 400-residue protein sequence, read N- to C-terminus: Centrosomal protein CEP57L1 (400 aa).

A Phosphoserine modification is found at Ser45. Coiled coils occupy residues 47–111 and 138–213; these read NNQA…KKDI and NVER…QDRA. 2 disordered regions span residues 222–261 and 314–400; these read REPPQQRDHKFRTPTFERKKPFRTTSQARANPQSSGEPVS and MESK…KWEQ. Residues 244 to 258 show a composition bias toward polar residues; that stretch reads RTTSQARANPQSSGE. Positions 261–345 form a coiled coil; sequence SICDSLSELL…EKIENSRINE (85 aa). Basic and acidic residues-rich tracts occupy residues 314–342 and 391–400; these read MESKGDQISKLKKHQDSVRKLQEKIENSR and LRRDDIKWEQ.

Belongs to the translokin family.

It localises to the cytoplasm. Its subcellular location is the cytoskeleton. The protein resides in the microtubule organizing center. The protein localises to the centrosome. Its function is as follows. Centrosomal protein which may be required for microtubule attachment to centrosomes. In Mus musculus (Mouse), this protein is Centrosomal protein CEP57L1 (Cep57l1).